Here is a 242-residue protein sequence, read N- to C-terminus: MSKRRIAPLTFLRRLLLRILAALAVFWGGGIALFSVVPVPFSAVMAERQISAWLGGEFGYVAHSDWVSMADISPWMGLAVIAAEDQKFPEHWGFDVPAIEKALAHNERNESRIRGASTLSQQTAKNLFLWDGRSWLRKGLEAGLTLGIETVWSKKRILTVYLNIAEFGDGIFGVEAAAQRYFHKPASRLSVSEAALLAAVLPNPIRYKANAPSGYVRSRQAWIMRQMRQLGGESFMTRNQLN.

The helical transmembrane segment at isoleucine 19–valine 39 threads the bilayer.

Belongs to the glycosyltransferase 51 family.

The protein localises to the cell inner membrane. It catalyses the reaction [GlcNAc-(1-&gt;4)-Mur2Ac(oyl-L-Ala-gamma-D-Glu-L-Lys-D-Ala-D-Ala)](n)-di-trans,octa-cis-undecaprenyl diphosphate + beta-D-GlcNAc-(1-&gt;4)-Mur2Ac(oyl-L-Ala-gamma-D-Glu-L-Lys-D-Ala-D-Ala)-di-trans,octa-cis-undecaprenyl diphosphate = [GlcNAc-(1-&gt;4)-Mur2Ac(oyl-L-Ala-gamma-D-Glu-L-Lys-D-Ala-D-Ala)](n+1)-di-trans,octa-cis-undecaprenyl diphosphate + di-trans,octa-cis-undecaprenyl diphosphate + H(+). Its pathway is cell wall biogenesis; peptidoglycan biosynthesis. Functionally, peptidoglycan polymerase that catalyzes glycan chain elongation from lipid-linked precursors. This Salmonella heidelberg (strain SL476) protein is Biosynthetic peptidoglycan transglycosylase.